A 160-amino-acid polypeptide reads, in one-letter code: MISNQNQVYVVNVREETLKNPYYRRVIDTSPHQQLVLMSLKPKEDIKFEIHPDNDQHIRIEKGTAIALTGKNKDTKHVLTEGMCIVIPAGTWHQIINSSNTDYLKLYTIYSPADHPPGEIDVRRPQSGGSGSKTGDFKNKYYKYKYKYFKLRSSVPRELN.

In terms of domain architecture, Cupin type-2 spans 37–110 (LMSLKPKEDI…TDYLKLYTIY (74 aa)).

The protein localises to the virion. This is an uncharacterized protein from Acanthamoeba polyphaga mimivirus (APMV).